Here is a 381-residue protein sequence, read N- to C-terminus: Na(+)/H(+) antiporter NhaA 1 (381 aa).

11 consecutive transmembrane segments (helical) span residues 18–38 (GLLL…SYSA), 53–73 (ITHW…GLEL), 89–109 (SLPI…FLAL), 118–138 (GAGI…SLLG), 147–167 (VFLT…IAVF), 170–190 (TSIG…LFVL), 210–230 (YFML…AFVI), 251–271 (PVAF…AIES), 283–303 (FGII…FSSI), 321–341 (ILGA…ITLL), and 348–368 (IIVF…ITGF).

The protein belongs to the NhaA Na(+)/H(+) (TC 2.A.33) antiporter family.

The protein localises to the cell inner membrane. It carries out the reaction Na(+)(in) + 2 H(+)(out) = Na(+)(out) + 2 H(+)(in). Functionally, na(+)/H(+) antiporter that extrudes sodium in exchange for external protons. The sequence is that of Na(+)/H(+) antiporter NhaA 1 from Flavobacterium johnsoniae (strain ATCC 17061 / DSM 2064 / JCM 8514 / BCRC 14874 / CCUG 350202 / NBRC 14942 / NCIMB 11054 / UW101) (Cytophaga johnsonae).